The chain runs to 25 residues: Snaclec bothroalternin subunit alpha/beta (25 aa).

In terms of domain architecture, C-type lectin spans 1–25 (DCPSDWSNHEGHCYRVFNEWMNWAD). Residues C2 and C13 are joined by a disulfide bond.

This sequence belongs to the snaclec family. Heterodimer of subunits alpha and beta; disulfide-linked. As to expression, expressed by the venom gland.

The protein localises to the secreted. In terms of biological role, thrombin (F2) inhibitor that inhibits aggregation of rabbit platelets induced by alpha-thrombin. The protein is Snaclec bothroalternin subunit alpha/beta of Bothrops alternatus (Urutu).